A 494-amino-acid chain; its full sequence is Inosine-5'-monophosphate dehydrogenase (494 aa).

CBS domains are found at residues 93-154 (IIRN…NEKI) and 158-217 (MTTD…CKDM). Residues Asp251 and 301 to 303 (GIG) contribute to the NAD(+) site. Positions 303 and 305 each coordinate K(+). Ser306 contacts IMP. A K(+)-binding site is contributed by Cys308. Cys308 functions as the Thioimidate intermediate in the catalytic mechanism. IMP-binding positions include 341–343 (DGG), 364–365 (GS), and 388–392 (YRGMG). Arg406 (proton acceptor) is an active-site residue. An IMP-binding site is contributed by Glu421. K(+) is bound by residues Glu475, Ser476, and His477.

It belongs to the IMPDH/GMPR family. In terms of assembly, homotetramer. K(+) is required as a cofactor.

It catalyses the reaction IMP + NAD(+) + H2O = XMP + NADH + H(+). It functions in the pathway purine metabolism; XMP biosynthesis via de novo pathway; XMP from IMP: step 1/1. Its activity is regulated as follows. Mycophenolic acid (MPA) is a non-competitive inhibitor that prevents formation of the closed enzyme conformation by binding to the same site as the amobile flap. In contrast, mizoribine monophosphate (MZP) is a competitive inhibitor that induces the closed conformation. MPA is a potent inhibitor of mammalian IMPDHs but a poor inhibitor of the bacterial enzymes. MZP is a more potent inhibitor of bacterial IMPDH. Catalyzes the conversion of inosine 5'-phosphate (IMP) to xanthosine 5'-phosphate (XMP), the first committed and rate-limiting step in the de novo synthesis of guanine nucleotides, and therefore plays an important role in the regulation of cell growth. The polypeptide is Inosine-5'-monophosphate dehydrogenase (Chlorobaculum parvum (strain DSM 263 / NCIMB 8327) (Chlorobium vibrioforme subsp. thiosulfatophilum)).